We begin with the raw amino-acid sequence, 190 residues long: Subtilisin inhibitor CLSI-II (190 aa).

Cystine bridges form between C44–C88 and C142–C149.

It belongs to the protease inhibitor I3 (leguminous Kunitz-type inhibitor) family. As to quaternary structure, forms active dimers on storage in aqueous solution, possibly through formation of an intermolecular disulfide bond. In terms of processing, the N-terminal Asn is removed in about 50% of both the CLSI-II and CLSI-III chains.

The protein localises to the secreted. Functionally, inhibits subtilisin-type microbial serine proteases incuding proteinase K, subtilisin BPN', subtilisin Carlsberg and subtilisin E in a non-stoichiometric manner. Weakly inhibits A.oryzae protease and some metalloproteases including pronase E. Does not inhibit trypsin, chymotrypsin, S.griseus alkaline protease or A.lyticus lysyl endopeptidase. CLSI-II has a wider inhibitory specificity than CLSI-III. The sequence is that of Subtilisin inhibitor CLSI-II from Canavalia lineata (Beach bean).